Consider the following 157-residue polypeptide: Eukaryotic translation initiation factor 5A-1 (157 aa).

A Hypusine modification is found at K52. 2 positions are modified to phosphoserine: S75 and S77. A Phosphothreonine modification is found at T78.

It belongs to the eIF-5A family. In terms of processing, lys-52 undergoes hypusination, a unique post-translational modification that consists in the addition of a butylamino group from spermidine to lysine side chain, leading to the formation of the unusual amino acid hypusine. eIF-5As are the only known proteins to undergo this modification, which is essential for their function.

The protein localises to the cytoplasm. Functionally, translation factor that promotes translation elongation and termination, particularly upon ribosome stalling at specific amino acid sequence contexts. Binds between the exit (E) and peptidyl (P) site of the ribosome and promotes rescue of stalled ribosome: specifically required for efficient translation of polyproline-containing peptides as well as other motifs that stall the ribosome. Acts as a ribosome quality control (RQC) cofactor by joining the RQC complex to facilitate peptidyl transfer during CAT tailing step. This Schizosaccharomyces pombe (strain 972 / ATCC 24843) (Fission yeast) protein is Eukaryotic translation initiation factor 5A-1 (tif51a).